Here is a 703-residue protein sequence, read N- to C-terminus: Subtilisin-like protease SBT4.7 (703 aa).

The first 19 residues, 1-19 (MAKRDYFCFVVLFLSSVSA), serve as a signal peptide directing secretion. Positions 20 to 107 (VIDDPQNKQV…VFPNINYKLQ (88 aa)) are cleaved as a propeptide — activation peptide. An Inhibitor I9 domain is found at 29–106 (VYVVYMGSLP…SVFPNINYKL (78 aa)). Residues 111–556 (SWDFLGLKEG…AGHVDQIAAI (446 aa)) form the Peptidase S8 domain. Catalysis depends on aspartate 139, which acts as the Charge relay system. The N-linked (GlcNAc...) asparagine glycan is linked to asparagine 170. The active-site Charge relay system is the histidine 194. Asparagine 217, asparagine 360, asparagine 416, and asparagine 433 each carry an N-linked (GlcNAc...) asparagine glycan. The region spanning 350–411 (KYPLVYGDNF…LLPPDDFDSL (62 aa)) is the PA domain. The active-site Charge relay system is the serine 495. Residues asparagine 577, asparagine 615, and asparagine 633 are each glycosylated (N-linked (GlcNAc...) asparagine).

This sequence belongs to the peptidase S8 family. Post-translationally, the C-terminal propeptide is autocleaved.

It is found in the secreted. The sequence is that of Subtilisin-like protease SBT4.7 from Arabidopsis thaliana (Mouse-ear cress).